A 208-amino-acid chain; its full sequence is Uracil phosphoribosyltransferase (208 aa).

5-phospho-alpha-D-ribose 1-diphosphate-binding positions include Arg78, Arg103, and 130 to 138 (DPMLATGGS). Residues Ile193 and 198–200 (GDA) each bind uracil. Asp199 is a binding site for 5-phospho-alpha-D-ribose 1-diphosphate.

It belongs to the UPRTase family. It depends on Mg(2+) as a cofactor.

The enzyme catalyses UMP + diphosphate = 5-phospho-alpha-D-ribose 1-diphosphate + uracil. It functions in the pathway pyrimidine metabolism; UMP biosynthesis via salvage pathway; UMP from uracil: step 1/1. With respect to regulation, allosterically activated by GTP. Catalyzes the conversion of uracil and 5-phospho-alpha-D-ribose 1-diphosphate (PRPP) to UMP and diphosphate. This is Uracil phosphoribosyltransferase from Actinobacillus succinogenes (strain ATCC 55618 / DSM 22257 / CCUG 43843 / 130Z).